The sequence spans 156 residues: Ribosomal RNA large subunit methyltransferase H (156 aa).

S-adenosyl-L-methionine contacts are provided by residues Leu-73, Gly-104, and 123–128 (LSALTL).

Belongs to the RNA methyltransferase RlmH family. As to quaternary structure, homodimer.

The protein localises to the cytoplasm. It catalyses the reaction pseudouridine(1915) in 23S rRNA + S-adenosyl-L-methionine = N(3)-methylpseudouridine(1915) in 23S rRNA + S-adenosyl-L-homocysteine + H(+). Specifically methylates the pseudouridine at position 1915 (m3Psi1915) in 23S rRNA. This Shewanella denitrificans (strain OS217 / ATCC BAA-1090 / DSM 15013) protein is Ribosomal RNA large subunit methyltransferase H.